A 255-amino-acid chain; its full sequence is Vitamin B12 import ATP-binding protein BtuD (255 aa).

An ABC transporter domain is found at 2–240; sequence MHVKHIALGS…EGLAEVFQTQ (239 aa). 30-37 contributes to the ATP binding site; that stretch reads GPNGSGKS.

This sequence belongs to the ABC transporter superfamily. Vitamin B12 importer (TC 3.A.1.13.1) family. In terms of assembly, the complex is composed of two ATP-binding proteins (BtuD), two transmembrane proteins (BtuC) and a solute-binding protein (BtuF).

The protein resides in the cell inner membrane. It carries out the reaction an R-cob(III)alamin(out) + ATP + H2O = an R-cob(III)alamin(in) + ADP + phosphate + H(+). Part of the ABC transporter complex BtuCDF involved in vitamin B12 import. Responsible for energy coupling to the transport system. The chain is Vitamin B12 import ATP-binding protein BtuD from Vibrio campbellii (strain ATCC BAA-1116).